We begin with the raw amino-acid sequence, 356 residues long: Protein RecA (356 aa).

68–75 is an ATP binding site; that stretch reads GPESSGKT.

Belongs to the RecA family.

The protein localises to the cytoplasm. Its function is as follows. Can catalyze the hydrolysis of ATP in the presence of single-stranded DNA, the ATP-dependent uptake of single-stranded DNA by duplex DNA, and the ATP-dependent hybridization of homologous single-stranded DNAs. It interacts with LexA causing its activation and leading to its autocatalytic cleavage. The protein is Protein RecA of Clostridium botulinum (strain Alaska E43 / Type E3).